A 229-amino-acid chain; its full sequence is ATP-dependent dethiobiotin synthetase BioD (229 aa).

Residue 12–17 coordinates ATP; that stretch reads GVGKTV. A Mg(2+)-binding site is contributed by Thr16. The active site involves Lys37. Thr41 contacts substrate. ATP contacts are provided by residues Asp53, 112-115, and 201-203; these read EGAG and PAG. Positions 53 and 112 each coordinate Mg(2+).

It belongs to the dethiobiotin synthetase family. As to quaternary structure, homodimer. Mg(2+) is required as a cofactor.

Its subcellular location is the cytoplasm. It carries out the reaction (7R,8S)-7,8-diammoniononanoate + CO2 + ATP = (4R,5S)-dethiobiotin + ADP + phosphate + 3 H(+). It functions in the pathway cofactor biosynthesis; biotin biosynthesis; biotin from 7,8-diaminononanoate: step 1/2. Catalyzes a mechanistically unusual reaction, the ATP-dependent insertion of CO2 between the N7 and N8 nitrogen atoms of 7,8-diaminopelargonic acid (DAPA, also called 7,8-diammoniononanoate) to form a ureido ring. This Mycobacterium sp. (strain KMS) protein is ATP-dependent dethiobiotin synthetase BioD.